Reading from the N-terminus, the 324-residue chain is NADH-dependent D-xylose reductase (324 aa).

Residue Y54 is the Proton donor of the active site. Position 116 (H116) interacts with substrate. 220-286 (SSFGPQSFLE…SNSPDRMAQN (67 aa)) is a binding site for NAD(+).

Belongs to the aldo/keto reductase family.

It catalyses the reaction xylitol + NAD(+) = D-xylose + NADH + H(+). It carries out the reaction xylitol + NADP(+) = D-xylose + NADPH + H(+). It functions in the pathway carbohydrate metabolism; D-xylose degradation. Functionally, reduces D-xylose into xylitol. Preferentially utilizes NADH as a cosubstrate. The chain is NADH-dependent D-xylose reductase (XYL1) from Candida parapsilosis (Yeast).